The primary structure comprises 617 residues: uncharacterized protein (617 aa).

2 stretches are compositionally biased toward low complexity: residues 1 to 16 and 36 to 45; these read MSKCATPTPSTSSNSS and STTSSNGSNS. A disordered region spans residues 1–49; it reads MSKCATPTPSTSSNSSDEAKRSPQPMSRGFPQRNMSTTSSNGSNSPRHR. Transmembrane regions (helical) follow at residues 219-239, 262-282, and 427-447; these read LMIGAAGGVGGVLIGLTGGLA, TAGAAVLGTTMGVAGAGFTGY, and PITLIGFSLGARVIFHCLLTM.

This sequence belongs to the TMCO4 family.

The protein resides in the membrane. This is an uncharacterized protein from Caenorhabditis elegans.